Consider the following 598-residue polypeptide: Elongation factor 4 2 (598 aa).

One can recognise a tr-type G domain in the interval Lys2–Lys184. Residues Asp14–Thr19 and Asn131–Asp134 each bind GTP.

This sequence belongs to the TRAFAC class translation factor GTPase superfamily. Classic translation factor GTPase family. LepA subfamily.

It localises to the cell inner membrane. It carries out the reaction GTP + H2O = GDP + phosphate + H(+). Required for accurate and efficient protein synthesis under certain stress conditions. May act as a fidelity factor of the translation reaction, by catalyzing a one-codon backward translocation of tRNAs on improperly translocated ribosomes. Back-translocation proceeds from a post-translocation (POST) complex to a pre-translocation (PRE) complex, thus giving elongation factor G a second chance to translocate the tRNAs correctly. Binds to ribosomes in a GTP-dependent manner. This chain is Elongation factor 4 2, found in Rhodopirellula baltica (strain DSM 10527 / NCIMB 13988 / SH1).